A 79-amino-acid polypeptide reads, in one-letter code: MGEFSLTHILLLAVIFLIFFGPSRLPQLGQSMGKAIRGFKQGLNEIDVDAKDIHDNQQVSHQNKQSMGQTQKQGENQNS.

The helical transmembrane segment at 1 to 21 (MGEFSLTHILLLAVIFLIFFG) threads the bilayer. The tract at residues 52–79 (DIHDNQQVSHQNKQSMGQTQKQGENQNS) is disordered. Positions 56-79 (NQQVSHQNKQSMGQTQKQGENQNS) are enriched in polar residues.

It belongs to the TatA/E family. In terms of assembly, the Tat system comprises two distinct complexes: a TatABC complex, containing multiple copies of TatA, TatB and TatC subunits, and a separate TatA complex, containing only TatA subunits. Substrates initially bind to the TatABC complex, which probably triggers association of the separate TatA complex to form the active translocon.

It localises to the cell inner membrane. Functionally, part of the twin-arginine translocation (Tat) system that transports large folded proteins containing a characteristic twin-arginine motif in their signal peptide across membranes. TatA could form the protein-conducting channel of the Tat system. In Bdellovibrio bacteriovorus (strain ATCC 15356 / DSM 50701 / NCIMB 9529 / HD100), this protein is Sec-independent protein translocase protein TatA.